We begin with the raw amino-acid sequence, 232 residues long: 5'-methylthioadenosine/S-adenosylhomocysteine nucleosidase (232 aa).

Glu12 serves as the catalytic Proton acceptor. Residues Gly78, Ile152, and Met173–Glu174 contribute to the substrate site. The Proton donor role is filled by Asp197.

This sequence belongs to the PNP/UDP phosphorylase family. MtnN subfamily. As to quaternary structure, homodimer.

The catalysed reaction is S-adenosyl-L-homocysteine + H2O = S-(5-deoxy-D-ribos-5-yl)-L-homocysteine + adenine. The enzyme catalyses S-methyl-5'-thioadenosine + H2O = 5-(methylsulfanyl)-D-ribose + adenine. It catalyses the reaction 5'-deoxyadenosine + H2O = 5-deoxy-D-ribose + adenine. Its pathway is amino-acid biosynthesis; L-methionine biosynthesis via salvage pathway; S-methyl-5-thio-alpha-D-ribose 1-phosphate from S-methyl-5'-thioadenosine (hydrolase route): step 1/2. In terms of biological role, catalyzes the irreversible cleavage of the glycosidic bond in both 5'-methylthioadenosine (MTA) and S-adenosylhomocysteine (SAH/AdoHcy) to adenine and the corresponding thioribose, 5'-methylthioribose and S-ribosylhomocysteine, respectively. Also cleaves 5'-deoxyadenosine, a toxic by-product of radical S-adenosylmethionine (SAM) enzymes, into 5-deoxyribose and adenine. Thus, is required for in vivo function of the radical SAM enzymes biotin synthase and lipoic acid synthase, that are inhibited by 5'-deoxyadenosine accumulation. This Salmonella agona (strain SL483) protein is 5'-methylthioadenosine/S-adenosylhomocysteine nucleosidase.